We begin with the raw amino-acid sequence, 187 residues long: Protein GrpE (187 aa).

The tract at residues 1–31 (MEKKETKNDAEKNNKQDNKSTKSQKKENLNL) is disordered.

It belongs to the GrpE family. In terms of assembly, homodimer.

It localises to the cytoplasm. Its function is as follows. Participates actively in the response to hyperosmotic and heat shock by preventing the aggregation of stress-denatured proteins, in association with DnaK and GrpE. It is the nucleotide exchange factor for DnaK and may function as a thermosensor. Unfolded proteins bind initially to DnaJ; upon interaction with the DnaJ-bound protein, DnaK hydrolyzes its bound ATP, resulting in the formation of a stable complex. GrpE releases ADP from DnaK; ATP binding to DnaK triggers the release of the substrate protein, thus completing the reaction cycle. Several rounds of ATP-dependent interactions between DnaJ, DnaK and GrpE are required for fully efficient folding. The sequence is that of Protein GrpE from Borrelia garinii subsp. bavariensis (strain ATCC BAA-2496 / DSM 23469 / PBi) (Borreliella bavariensis).